Reading from the N-terminus, the 368-residue chain is 4-hydroxy-3-methylbut-2-en-1-yl diphosphate synthase (flavodoxin) (368 aa).

Residues cysteine 268, cysteine 271, cysteine 303, and glutamate 310 each coordinate [4Fe-4S] cluster.

It belongs to the IspG family. It depends on [4Fe-4S] cluster as a cofactor.

The catalysed reaction is (2E)-4-hydroxy-3-methylbut-2-enyl diphosphate + oxidized [flavodoxin] + H2O + 2 H(+) = 2-C-methyl-D-erythritol 2,4-cyclic diphosphate + reduced [flavodoxin]. The protein operates within isoprenoid biosynthesis; isopentenyl diphosphate biosynthesis via DXP pathway; isopentenyl diphosphate from 1-deoxy-D-xylulose 5-phosphate: step 5/6. In terms of biological role, converts 2C-methyl-D-erythritol 2,4-cyclodiphosphate (ME-2,4cPP) into 1-hydroxy-2-methyl-2-(E)-butenyl 4-diphosphate. The protein is 4-hydroxy-3-methylbut-2-en-1-yl diphosphate synthase (flavodoxin) of Listeria monocytogenes serotype 4b (strain CLIP80459).